A 306-amino-acid chain; its full sequence is Ribonuclease Z (306 aa).

Residues histidine 63, histidine 65, aspartate 67, histidine 68, histidine 141, aspartate 211, and histidine 269 each coordinate Zn(2+). Catalysis depends on aspartate 67, which acts as the Proton acceptor.

Belongs to the RNase Z family. As to quaternary structure, homodimer. It depends on Zn(2+) as a cofactor.

The enzyme catalyses Endonucleolytic cleavage of RNA, removing extra 3' nucleotides from tRNA precursor, generating 3' termini of tRNAs. A 3'-hydroxy group is left at the tRNA terminus and a 5'-phosphoryl group is left at the trailer molecule.. Zinc phosphodiesterase, which displays some tRNA 3'-processing endonuclease activity. Probably involved in tRNA maturation, by removing a 3'-trailer from precursor tRNA. This chain is Ribonuclease Z, found in Staphylococcus epidermidis (strain ATCC 35984 / DSM 28319 / BCRC 17069 / CCUG 31568 / BM 3577 / RP62A).